A 1035-amino-acid polypeptide reads, in one-letter code: Cell-division control histidine kinase PdhS (1035 aa).

The important for polar localization stretch occupies residues 1-613 (MSGSYPFIDI…HADGSEEPVD (613 aa)). The interval 500–533 (QGLANTRAESETPVSETSSIEPVEPTPPVKTRSE) is disordered. Residues 614-1035 (AHLNAIAWRG…VFPPTRVLAD (422 aa)) form an interaction with DivK region. The PAS domain occupies 659 to 730 (HVEELKTILD…YLHGLSGNGV (72 aa)). Residues 802 to 1031 (RISHEIRTPL…VVEIVFPPTR (230 aa)) enclose the Histidine kinase domain. H805 is modified (phosphohistidine; by autocatalysis).

In terms of assembly, interacts with DivK.

It is found in the cytoplasm. It carries out the reaction ATP + protein L-histidine = ADP + protein N-phospho-L-histidine.. Functions as a polar differentiation marker. Essential protein that, by localizing in the old pole of dividing cells, controls cell division and maturation, probably through control of DivK phosphorylation status and cellular distribution, which in turn regulates CtrA, a transcriptional regulator of the minB operon. The asymmetrical localization of this protein is probably required for cells to enter a new division cycle. The polypeptide is Cell-division control histidine kinase PdhS (pdhS) (Brucella abortus (strain S19)).